We begin with the raw amino-acid sequence, 337 residues long: Neurogenic differentiation factor 6 (337 aa).

A disordered region spans residues 43–82; that stretch reads LRGKSIKRAPGEETEKEEEEEDREEEDENGLPRRRGLRKK. Acidic residues predominate over residues 54–71; the sequence is EETEKEEEEEDREEEDEN. A Nuclear localization signal motif is present at residues 80 to 86; sequence RKKKTTK. The region spanning 94-146 is the bHLH domain; sequence FRRQEANARERNRMHGLNDALDNLRKVVPCYSKTQKLSKIETLRLAKNYIWAL.

In terms of assembly, efficient DNA binding requires dimerization with another bHLH protein.

Its subcellular location is the nucleus. Its function is as follows. Activates E box-dependent transcription in collaboration with TCF3/E47. May be a trans-acting factor involved in the development and maintenance of the mammalian nervous system. Transactivates the promoter of its own gene. This Homo sapiens (Human) protein is Neurogenic differentiation factor 6 (NEUROD6).